The following is a 217-amino-acid chain: Adenylate kinase (217 aa).

ATP is bound at residue 11–16; sequence GAGKGT. The tract at residues 31-60 is NMP; the sequence is STGDMFREAMANKTPVGLEAKSYIDKGDLV. AMP-binding positions include T32, R37, 58–60, 86–89, and Q93; these read DLV and GFPR. The tract at residues 127–165 is LID; that stretch reads ARFMCKNCGATYNKFSKKPKVEGTCDRCGGHEFYQREDD. R128 contacts ATP. 2 residues coordinate Zn(2+): C131 and C134. 137 to 138 is a binding site for ATP; that stretch reads TY. Zn(2+) is bound by residues C151 and C154. Residues R162 and R173 each coordinate AMP. Q201 contacts ATP.

It belongs to the adenylate kinase family. As to quaternary structure, monomer.

The protein resides in the cytoplasm. It carries out the reaction AMP + ATP = 2 ADP. It participates in purine metabolism; AMP biosynthesis via salvage pathway; AMP from ADP: step 1/1. In terms of biological role, catalyzes the reversible transfer of the terminal phosphate group between ATP and AMP. Plays an important role in cellular energy homeostasis and in adenine nucleotide metabolism. The polypeptide is Adenylate kinase (Lactobacillus delbrueckii subsp. bulgaricus (strain ATCC 11842 / DSM 20081 / BCRC 10696 / JCM 1002 / NBRC 13953 / NCIMB 11778 / NCTC 12712 / WDCM 00102 / Lb 14)).